Here is a 391-residue protein sequence, read N- to C-terminus: Ribosomal RNA small subunit methyltransferase H (391 aa).

Positions 1–23 (MDVDVQDDVQGRAGEGAEERAHD) are disordered. S-adenosyl-L-methionine-binding positions include 59–61 (GGH), Asp78, Leu112, Asp126, and Gln133. The tract at residues 284-391 (SSSSAPPDLP…EPGATVERTP (108 aa)) is disordered. The span at 368-380 (RTQEFETHPHLEP) shows a compositional bias: basic and acidic residues.

It belongs to the methyltransferase superfamily. RsmH family.

The protein resides in the cytoplasm. The catalysed reaction is cytidine(1402) in 16S rRNA + S-adenosyl-L-methionine = N(4)-methylcytidine(1402) in 16S rRNA + S-adenosyl-L-homocysteine + H(+). In terms of biological role, specifically methylates the N4 position of cytidine in position 1402 (C1402) of 16S rRNA. In Kineococcus radiotolerans (strain ATCC BAA-149 / DSM 14245 / SRS30216), this protein is Ribosomal RNA small subunit methyltransferase H.